Reading from the N-terminus, the 671-residue chain is Zinc finger and BTB domain-containing protein 16-A (671 aa).

The region spanning cysteine 34–valine 96 is the BTB domain. 2 disordered regions span residues glutamate 130–serine 167 and valine 248–valine 289. A compositionally biased stretch (basic and acidic residues) spans arginine 270 to aspartate 279. Threonine 283 bears the Phosphothreonine mark. C2H2-type zinc fingers lie at residues glutamate 401–histidine 423, tyrosine 429–histidine 451, isoleucine 458–histidine 480, isoleucine 487–histidine 509, tyrosine 515–histidine 537, phenylalanine 544–histidine 566, tyrosine 572–histidine 594, phenylalanine 600–histidine 622, and tyrosine 628–histidine 650.

Belongs to the krueppel C2H2-type zinc-finger protein family. As to quaternary structure, interacts with btbd6a (via BTB domain). In terms of processing, polyubiquitinated, leading to its proteasomal degradation. During early stages of primary neurogenesis, expressed in the neural epithelium, with highest levels in the forebrain and midbrain. Also expressed in a posterior-to-anterior gradient in the caudal neural plate at the 3-6 somite stage.

It localises to the nucleus. The protein localises to the cytoplasm. It participates in protein modification; protein ubiquitination. In terms of biological role, probable transcription factor. Probable substrate-recognition component of an E3 ubiquitin-protein ligase complex which mediates the ubiquitination and subsequent proteasomal degradation of target proteins. Inhibits neurogenesis. This Danio rerio (Zebrafish) protein is Zinc finger and BTB domain-containing protein 16-A.